The chain runs to 126 residues: Protein MGF 100-1R (126 aa).

Belongs to the asfivirus MGF 100 family.

Functionally, plays a role in virus cell tropism, and may be required for efficient virus replication in macrophages. The chain is Protein MGF 100-1R from Ornithodoros (relapsing fever ticks).